The sequence spans 864 residues: Leucine--tRNA ligase (864 aa).

A 'HIGH' region motif is present at residues 42–52; the sequence is PYPSGRLHMGH. A 'KMSKS' region motif is present at residues 621 to 625; that stretch reads KMSKS. Lys-624 contributes to the ATP binding site.

Belongs to the class-I aminoacyl-tRNA synthetase family.

The protein localises to the cytoplasm. It carries out the reaction tRNA(Leu) + L-leucine + ATP = L-leucyl-tRNA(Leu) + AMP + diphosphate. The polypeptide is Leucine--tRNA ligase (Alkalilimnicola ehrlichii (strain ATCC BAA-1101 / DSM 17681 / MLHE-1)).